Consider the following 746-residue polypeptide: MDHTYQYSWIIPFIPLPVPILLGVGLLLFPTATKNLRRMWTFLSIFLLSIVMIFSLYLSIQQIFLSCIHQNVWSWTINNEFSFEFGYFIDPLTSIMSILITTVGILVLIYSDNYMSHDQGYLRFFAYMGFFNTSMLGLVTSSNLIQVYFFWELVGMCSYLLIGFWFTRPIAANACQKAFVTNRLGDFGLLLGILGLYWITGSFEFQDLFEIFNNFILNNRVNLLFLTLCAFLLFVGPIAKSAQFPLHVWLPDAMEGPTPISALIHAATMVAAGIFLVARLLPLFIVIPSIMYIISLIGIITVLLGATLALAQKDIKRGLAYSTMSQLGYMMLALGMGSYRSALFHLITHAYSKALLFLGSGSIIHSMEAIVGYSPDKSQNMILMGGLTKHVPITKTAFLVGTLSLCGIPPLACFWSKDEILNDSLLFSPIFAIIACSTAGLTAFYMFRIYFLTFEGHLNTYFINYSGKKSSSLYSLSLWGKEEEKKLNRNFGLVPLLTMNNTKRASFFCNKTYKISNNVRNQIFITIENFGLNKKTFYYPHESDNTILFPMLVLLLFTLFIGAIGIPFNQEGIDFDILSKLFTPSINLLHKNSQNFVDWYEFLRNATFSVSIAVFGIFIAYCLYKPFYSSLLNLTLLNSFQKWNSKRIRWEKLINFVYKWSYNRGYVDAFFKTSLIESIRRLAKQTNFFDKRIIDGITNGVGITSFFVGEVTKYIGGSRISSYLFLYLSYVLIFLMILFFFYFEKF.

Transmembrane regions (helical) follow at residues 9–29 (WIIP…LLLF), 40–60 (WTFL…YLSI), 89–109 (IDPL…LVLI), 125–145 (FAYM…SNLI), 147–167 (VYFF…FWFT), 185–205 (GDFG…SFEF), 221–241 (VNLL…IAKS), 258–278 (TPIS…FLVA), 280–300 (LLPL…IGII), 327–347 (LGYM…FHLI), 354–374 (ALLF…VGYS), 396–416 (TAFL…CFWS), 425–445 (LLFS…TAFY), 547–567 (ILFP…IGIP), 608–628 (FSVS…KPFY), and 723–743 (YLFL…FFYF).

It belongs to the complex I subunit 5 family. NDH is composed of at least 16 different subunits, 5 of which are encoded in the nucleus.

It localises to the plastid. Its subcellular location is the chloroplast thylakoid membrane. The enzyme catalyses a plastoquinone + NADH + (n+1) H(+)(in) = a plastoquinol + NAD(+) + n H(+)(out). The catalysed reaction is a plastoquinone + NADPH + (n+1) H(+)(in) = a plastoquinol + NADP(+) + n H(+)(out). Its function is as follows. NDH shuttles electrons from NAD(P)H:plastoquinone, via FMN and iron-sulfur (Fe-S) centers, to quinones in the photosynthetic chain and possibly in a chloroplast respiratory chain. The immediate electron acceptor for the enzyme in this species is believed to be plastoquinone. Couples the redox reaction to proton translocation, and thus conserves the redox energy in a proton gradient. The sequence is that of NAD(P)H-quinone oxidoreductase subunit 5, chloroplastic (ndhF) from Crucihimalaya wallichii (Rock-cress).